Here is a 253-residue protein sequence, read N- to C-terminus: Chloride intracellular channel protein 4 (253 aa).

An N-acetylalanine modification is found at A2. Positions 2-101 (ALSMPLNGLK…EEFLEEVLCP (100 aa)) are required for insertion into the membrane. Position 4 is a phosphoserine (S4). K24 is subject to N6-acetyllysine. The G-site signature appears at 35–38 (CPFS). The helical transmembrane segment at 37 to 57 (FSQRLFMILWLKGVVFSVTTV) threads the bilayer. In terms of domain architecture, GST C-terminal spans 81–244 (NSEVKTDVNK…PSDKEVEIAY (164 aa)). The residue at position 130 (K130) is an N6-acetyllysine. Phosphoserine occurs at positions 132, 167, and 236. Y244 carries the post-translational modification Phosphotyrosine.

This sequence belongs to the chloride channel CLIC family. Monomer. Interacts with HRH30. Interacts with AKAP9. Detected in blood vessels in the retina (at protein level). Expressed to the greatest extent in vivo in heart, lung, liver, kidney, and skin.

It is found in the cytoplasm. The protein resides in the cytoskeleton. It localises to the microtubule organizing center. The protein localises to the centrosome. Its subcellular location is the cytoplasmic vesicle membrane. It is found in the nucleus. The protein resides in the cell membrane. It localises to the mitochondrion. The protein localises to the cell junction. The catalysed reaction is chloride(in) = chloride(out). It carries out the reaction thiocyanate(in) = thiocyanate(out). The enzyme catalyses nitrate(in) = nitrate(out). It catalyses the reaction iodide(out) = iodide(in). The catalysed reaction is bromide(in) = bromide(out). It carries out the reaction fluoride(in) = fluoride(out). The enzyme catalyses choline(out) = choline(in). In terms of biological role, in the soluble state, catalyzes glutaredoxin-like thiol disulfide exchange reactions with reduced glutathione as electron donor. Can insert into membranes and form voltage-dependent multi-ion conductive channels. Membrane insertion seems to be redox-regulated and may occur only under oxidizing conditions. Has alternate cellular functions like a potential role in angiogenesis or in maintaining apical-basolateral membrane polarity during mitosis and cytokinesis. Could also promote endothelial cell proliferation and regulate endothelial morphogenesis (tubulogenesis). Promotes cell-surface expression of HRH3. The polypeptide is Chloride intracellular channel protein 4 (Clic4) (Mus musculus (Mouse)).